A 273-amino-acid chain; its full sequence is Shikimate dehydrogenase (NADP(+)) (273 aa).

Shikimate-binding positions include 19–21 (SQS) and Thr66. Catalysis depends on Lys70, which acts as the Proton acceptor. NADP(+) is bound at residue Glu82. Residues Asn91 and Asp107 each contribute to the shikimate site. NADP(+) is bound by residues 131–135 (GAGGA) and Met217. Tyr219 is a shikimate binding site. Residue Gly241 coordinates NADP(+).

It belongs to the shikimate dehydrogenase family. In terms of assembly, homodimer.

The enzyme catalyses shikimate + NADP(+) = 3-dehydroshikimate + NADPH + H(+). It participates in metabolic intermediate biosynthesis; chorismate biosynthesis; chorismate from D-erythrose 4-phosphate and phosphoenolpyruvate: step 4/7. Involved in the biosynthesis of the chorismate, which leads to the biosynthesis of aromatic amino acids. Catalyzes the reversible NADPH linked reduction of 3-dehydroshikimate (DHSA) to yield shikimate (SA). This is Shikimate dehydrogenase (NADP(+)) from Buchnera aphidicola subsp. Schizaphis graminum (strain Sg).